A 236-amino-acid chain; its full sequence is Uridylate kinase (236 aa).

8–11 (KLSG) serves as a coordination point for ATP. Residue G51 coordinates UMP. Residues G52 and R56 each contribute to the ATP site. UMP contacts are provided by residues D71 and 133 to 140 (TGRPFFTT). N161, F167, and D170 together coordinate ATP.

Belongs to the UMP kinase family. As to quaternary structure, homohexamer.

It is found in the cytoplasm. It catalyses the reaction UMP + ATP = UDP + ADP. Its pathway is pyrimidine metabolism; CTP biosynthesis via de novo pathway; UDP from UMP (UMPK route): step 1/1. Its activity is regulated as follows. Inhibited by UTP. Its function is as follows. Catalyzes the reversible phosphorylation of UMP to UDP. The chain is Uridylate kinase from Mesomycoplasma hyopneumoniae (strain 232) (Mycoplasma hyopneumoniae).